A 226-amino-acid chain; its full sequence is MATPASITNVTVEFLQFPALVTPPASTKSYFLGGAGVRGLNIQEEFVKFTGIGVYLEDKAVSSLGAKWKGKSAAELLDSLDFYRDIIKGPFEKLIRGSKLRTLDGREYVRKVSENCVAHMESVGTYSEAEEKAIEEFRNAFKDQNFPPGSTVFYKQSPTGTLGLSFSKDETIPEHEHAVIDNKPLSEAVLETMIGEIPVSPALKESLATRFHQFFKELEANPNIEN.

Positions 50, 115, and 192 each coordinate substrate.

It belongs to the chalcone isomerase family. Expressed in roots, shoots, flowers and seeds.

The enzyme catalyses a chalcone = a flavanone.. Its pathway is secondary metabolite biosynthesis; flavonoid biosynthesis. Its function is as follows. Catalyzes the intramolecular cyclization of bicyclic chalcones into tricyclic (S)-flavanones. Responsible for the isomerization of 4,2',4',6'-tetrahydroxychalcone (also termed chalcone) into naringenin. The polypeptide is Chalcone--flavanone isomerase 1B-2 (CHI1B2) (Glycine max (Soybean)).